An 885-amino-acid chain; its full sequence is Chitin synthase 3 (885 aa).

Residues 1 to 59 (MASQYPGHQLDDIPSTNVYRPPPRHEDDEAEHALLHQNSAYQSQYDDPHSRPLTPGQES) are disordered. Residues 23–34 (PRHEDDEAEHAL) are compositionally biased toward basic and acidic residues. Residues 36-45 (HQNSAYQSQY) are compositionally biased toward polar residues. The next 6 helical transmembrane spans lie at 565-585 (FFLH…WFSL), 620-640 (IINT…FILA), 650-670 (VAYI…IVLS), 707-727 (IVII…FLYM), 735-755 (SFAQ…IYAF), and 837-857 (LVAT…SDSL).

It belongs to the chitin synthase family. Class III subfamily.

Its subcellular location is the cell membrane. The enzyme catalyses [(1-&gt;4)-N-acetyl-beta-D-glucosaminyl](n) + UDP-N-acetyl-alpha-D-glucosamine = [(1-&gt;4)-N-acetyl-beta-D-glucosaminyl](n+1) + UDP + H(+). Its function is as follows. Polymerizes chitin, a structural polymer of the cell wall and septum, by transferring the sugar moiety of UDP-GlcNAc to the non-reducing end of the growing chitin polymer. Is not only stable at different pH, but is also able to tolerate a broad temperature range. With CHS2, plays an important role in virulence. This Exophiala dermatitidis (Black yeast-like fungus) protein is Chitin synthase 3.